The following is a 451-amino-acid chain: tRNA(Ile)-lysidine synthase (451 aa).

An ATP-binding site is contributed by 21–26; the sequence is SGGLDS.

It belongs to the tRNA(Ile)-lysidine synthase family.

The protein localises to the cytoplasm. It carries out the reaction cytidine(34) in tRNA(Ile2) + L-lysine + ATP = lysidine(34) in tRNA(Ile2) + AMP + diphosphate + H(+). In terms of biological role, ligates lysine onto the cytidine present at position 34 of the AUA codon-specific tRNA(Ile) that contains the anticodon CAU, in an ATP-dependent manner. Cytidine is converted to lysidine, thus changing the amino acid specificity of the tRNA from methionine to isoleucine. This Yersinia pseudotuberculosis serotype O:1b (strain IP 31758) protein is tRNA(Ile)-lysidine synthase.